Reading from the N-terminus, the 276-residue chain is MAPLKFCANISWLFTELPEFPQRMRAAASAGFRAVEAAWLYNTDLKELKTAKEETGLEFVLINTPPGDASAGDLGLAAVPGREQEFRQGLDLAVQYAKALDCTRIHLMAGRVPAGSERCALALQMEDTFVHNLKHAAGVLDKEGLLGLIEPINSRITDPRYFLHSPHQAAEILQRVDHPSIKMQMDIFHWQIMDGNLTHNIRRYLPMTGHIQIAQVPDRHEPDSPGELNFSFIFRLLEELDYQGFIGCEYKPQGSTEAGLEWLRKYWRSRNGGERD.

Active-site proton donor/acceptor residues include E150 and E249.

Belongs to the hyi family.

The enzyme catalyses 3-hydroxypyruvate = 2-hydroxy-3-oxopropanoate. In terms of biological role, catalyzes the reversible isomerization between hydroxypyruvate and 2-hydroxy-3-oxopropanoate (also termed tartronate semialdehyde). This is Putative hydroxypyruvate isomerase (hyi) from Danio rerio (Zebrafish).